The chain runs to 199 residues: dITP/XTP pyrophosphatase (199 aa).

A substrate-binding site is contributed by 7 to 12 (TGNKGK). D71 (proton acceptor) is an active-site residue. A Mg(2+)-binding site is contributed by D71. Substrate is bound by residues A72, 154–157 (FGYD), K177, and 182–183 (HR).

It belongs to the HAM1 NTPase family. As to quaternary structure, homodimer. Mg(2+) is required as a cofactor.

It catalyses the reaction XTP + H2O = XMP + diphosphate + H(+). The enzyme catalyses dITP + H2O = dIMP + diphosphate + H(+). It carries out the reaction ITP + H2O = IMP + diphosphate + H(+). Functionally, pyrophosphatase that catalyzes the hydrolysis of nucleoside triphosphates to their monophosphate derivatives, with a high preference for the non-canonical purine nucleotides XTP (xanthosine triphosphate), dITP (deoxyinosine triphosphate) and ITP. Seems to function as a house-cleaning enzyme that removes non-canonical purine nucleotides from the nucleotide pool, thus preventing their incorporation into DNA/RNA and avoiding chromosomal lesions. In Bdellovibrio bacteriovorus (strain ATCC 15356 / DSM 50701 / NCIMB 9529 / HD100), this protein is dITP/XTP pyrophosphatase.